A 376-amino-acid chain; its full sequence is Erythronate-4-phosphate dehydrogenase (376 aa).

S45 and T67 together coordinate substrate. Residue D147 participates in NAD(+) binding. R209 is a catalytic residue. D233 is a binding site for NAD(+). Residue E238 is part of the active site. The Proton donor role is filled by H255. An NAD(+)-binding site is contributed by G258. Residue Y259 participates in substrate binding.

The protein belongs to the D-isomer specific 2-hydroxyacid dehydrogenase family. PdxB subfamily. As to quaternary structure, homodimer.

The protein localises to the cytoplasm. The enzyme catalyses 4-phospho-D-erythronate + NAD(+) = (R)-3-hydroxy-2-oxo-4-phosphooxybutanoate + NADH + H(+). It participates in cofactor biosynthesis; pyridoxine 5'-phosphate biosynthesis; pyridoxine 5'-phosphate from D-erythrose 4-phosphate: step 2/5. Functionally, catalyzes the oxidation of erythronate-4-phosphate to 3-hydroxy-2-oxo-4-phosphonooxybutanoate. The chain is Erythronate-4-phosphate dehydrogenase from Shewanella sp. (strain W3-18-1).